We begin with the raw amino-acid sequence, 424 residues long: Glutamyl-tRNA reductase (424 aa).

Residues 51–54, S99, 104–106, and Q110 each bind substrate; these read TCNR and EDQ. C52 (nucleophile) is an active-site residue. 179-184 contributes to the NADP(+) binding site; that stretch reads GTGEMG.

The protein belongs to the glutamyl-tRNA reductase family. Homodimer.

It catalyses the reaction (S)-4-amino-5-oxopentanoate + tRNA(Glu) + NADP(+) = L-glutamyl-tRNA(Glu) + NADPH + H(+). It functions in the pathway porphyrin-containing compound metabolism; protoporphyrin-IX biosynthesis; 5-aminolevulinate from L-glutamyl-tRNA(Glu): step 1/2. Its function is as follows. Catalyzes the NADPH-dependent reduction of glutamyl-tRNA(Glu) to glutamate 1-semialdehyde (GSA). The polypeptide is Glutamyl-tRNA reductase (Methanospirillum hungatei JF-1 (strain ATCC 27890 / DSM 864 / NBRC 100397 / JF-1)).